We begin with the raw amino-acid sequence, 128 residues long: Large ribosomal subunit protein bL12 (128 aa).

The protein belongs to the bacterial ribosomal protein bL12 family. Homodimer. Part of the ribosomal stalk of the 50S ribosomal subunit. Forms a multimeric L10(L12)X complex, where L10 forms an elongated spine to which 2 to 4 L12 dimers bind in a sequential fashion. Binds GTP-bound translation factors.

Functionally, forms part of the ribosomal stalk which helps the ribosome interact with GTP-bound translation factors. Is thus essential for accurate translation. This Corynebacterium efficiens (strain DSM 44549 / YS-314 / AJ 12310 / JCM 11189 / NBRC 100395) protein is Large ribosomal subunit protein bL12.